A 179-amino-acid polypeptide reads, in one-letter code: Ferric nitrobindin-like protein (179 aa).

The short motif at 17–23 (GRWEGLG) is the GXWXGXG element.

It belongs to the nitrobindin family.

In Thermobifida fusca (strain YX), this protein is Ferric nitrobindin-like protein.